Consider the following 64-residue polypeptide: Protein YnhH (64 aa).

The polypeptide is Protein YnhH (Escherichia coli (strain K12)).